Consider the following 213-residue polypeptide: MRSGVIAQKVGMTRVYNDAGEHVPVTVLRMEGCQVVATRTVEKNGYTAVQLGAGQAKVKNTSKAMRGNFAIANVEPKAKLTEFRVSEDQLLEVGTEIKAGHFAAGQLVDVTGTTIGKGFAGAMKRHGFGGLRATHGVSVSHRSHGSTGSRQDPGKVFKNKKMAGHMGQTRVTTQNLEVVSTDEDRGLILIKGAVPGSKGAWIIVRDAVKSAAK.

Gln151 is subject to N5-methylglutamine.

Belongs to the universal ribosomal protein uL3 family. As to quaternary structure, part of the 50S ribosomal subunit. Forms a cluster with proteins L14 and L19. Methylated by PrmB.

Functionally, one of the primary rRNA binding proteins, it binds directly near the 3'-end of the 23S rRNA, where it nucleates assembly of the 50S subunit. This Rhizobium johnstonii (strain DSM 114642 / LMG 32736 / 3841) (Rhizobium leguminosarum bv. viciae) protein is Large ribosomal subunit protein uL3.